Reading from the N-terminus, the 302-residue chain is 4-diphosphocytidyl-2-C-methyl-D-erythritol kinase (302 aa).

Lysine 11 is a catalytic residue. Residue 93–103 (PVASGLAGGST) coordinates ATP. Aspartate 135 is an active-site residue.

Belongs to the GHMP kinase family. IspE subfamily.

The catalysed reaction is 4-CDP-2-C-methyl-D-erythritol + ATP = 4-CDP-2-C-methyl-D-erythritol 2-phosphate + ADP + H(+). It participates in isoprenoid biosynthesis; isopentenyl diphosphate biosynthesis via DXP pathway; isopentenyl diphosphate from 1-deoxy-D-xylulose 5-phosphate: step 3/6. Catalyzes the phosphorylation of the position 2 hydroxy group of 4-diphosphocytidyl-2C-methyl-D-erythritol. The protein is 4-diphosphocytidyl-2-C-methyl-D-erythritol kinase of Gloeobacter violaceus (strain ATCC 29082 / PCC 7421).